Here is a 238-residue protein sequence, read N- to C-terminus: Hydatid disease diagnostic antigen P-29 (238 aa).

Residues 18–238 (GELVNKNEKT…AKECSMMLGE (221 aa)) enclose the BAR domain.

In Echinococcus granulosus (Hydatid tapeworm), this protein is Hydatid disease diagnostic antigen P-29.